Here is a 288-residue protein sequence, read N- to C-terminus: Alpha/beta hydrolase domain-containing protein 17B (288 aa).

Residues Ser-170, Asp-235, and His-264 each act as charge relay system in the active site.

This sequence belongs to the AB hydrolase superfamily. ABHD17 family. Palmitoylated on cysteine residues located in a cysteine cluster at the N-terminus which promotes membrane localization.

The protein localises to the cell membrane. The protein resides in the recycling endosome membrane. It localises to the cell projection. Its subcellular location is the dendritic spine. It is found in the postsynaptic density membrane. It carries out the reaction S-hexadecanoyl-L-cysteinyl-[protein] + H2O = L-cysteinyl-[protein] + hexadecanoate + H(+). Functionally, hydrolyzes fatty acids from S-acylated cysteine residues in proteins. The chain is Alpha/beta hydrolase domain-containing protein 17B from Xenopus tropicalis (Western clawed frog).